Here is a 147-residue protein sequence, read N- to C-terminus: Prefoldin subunit alpha (147 aa).

It belongs to the prefoldin alpha subunit family. In terms of assembly, heterohexamer of two alpha and four beta subunits.

It localises to the cytoplasm. In terms of biological role, molecular chaperone capable of stabilizing a range of proteins. Seems to fulfill an ATP-independent, HSP70-like function in archaeal de novo protein folding. This is Prefoldin subunit alpha from Thermococcus onnurineus (strain NA1).